Here is a 201-residue protein sequence, read N- to C-terminus: Recombination protein RecR (201 aa).

The C4-type zinc-finger motif lies at 57-72 (CADCRTFTEQDVCNIC). The Toprim domain occupies 81-176 (GQICVVESPA…SASRIAHGVP (96 aa)).

The protein belongs to the RecR family.

May play a role in DNA repair. It seems to be involved in an RecBC-independent recombinational process of DNA repair. It may act with RecF and RecO. This Enterobacter sp. (strain 638) protein is Recombination protein RecR.